A 201-amino-acid polypeptide reads, in one-letter code: MQTSPLLETLMESLRCLPGVGPKSAQRMAFQLLQRDRSGGMRLAQALTRAMSEIGHCADCRTFTEQEICTICANPRRQHNGLICVVESPADIHAIEQTGQFSGRYFVLMGHLSPLDGIGPGDIGLDRLEQRLETESIQEVILATNPTVEGEATANYIASLCEQYGVDASRIAHGVPVGGELEMVDGTTLSHSLAGRQKFKF.

Residues 57–72 (CADCRTFTEQEICTIC) form a C4-type zinc finger. Residues 81-176 (GLICVVESPA…DASRIAHGVP (96 aa)) form the Toprim domain.

The protein belongs to the RecR family.

May play a role in DNA repair. It seems to be involved in an RecBC-independent recombinational process of DNA repair. It may act with RecF and RecO. In Erwinia tasmaniensis (strain DSM 17950 / CFBP 7177 / CIP 109463 / NCPPB 4357 / Et1/99), this protein is Recombination protein RecR.